Reading from the N-terminus, the 276-residue chain is uncharacterized protein (276 aa).

15–22 (GKGGVGKS) serves as a coordination point for ATP. 4Fe-4S ferredoxin-type domains follow at residues 68–96 (EIYE…DFKI) and 92–121 (GDFK…PIKR). Residues Cys76, Cys79, Cys82, Cys86, Cys101, Cys104, Cys107, and Cys111 each coordinate [4Fe-4S] cluster.

This is an uncharacterized protein from Methanocaldococcus jannaschii (strain ATCC 43067 / DSM 2661 / JAL-1 / JCM 10045 / NBRC 100440) (Methanococcus jannaschii).